The following is a 260-amino-acid chain: ATP synthase subunit a (260 aa).

The next 7 helical transmembrane spans lie at 29–49 (FSFT…LLLI), 95–115 (FFPC…QGMI), 124–144 (HFLI…IVGF), 151–171 (FFSF…LVLL), 191–211 (MMAG…MLCM), 213–233 (EIFY…LTGL), and 237–257 (VAIL…NDAI).

It belongs to the ATPase A chain family. In terms of assembly, F-type ATPases have 2 components, CF(1) - the catalytic core - and CF(0) - the membrane proton channel. CF(1) has five subunits: alpha(3), beta(3), gamma(1), delta(1), epsilon(1). CF(0) has three main subunits: a, b and c.

The protein localises to the mitochondrion inner membrane. Mitochondrial membrane ATP synthase (F(1)F(0) ATP synthase or Complex V) produces ATP from ADP in the presence of a proton gradient across the membrane which is generated by electron transport complexes of the respiratory chain. F-type ATPases consist of two structural domains, F(1) - containing the extramembraneous catalytic core and F(0) - containing the membrane proton channel, linked together by a central stalk and a peripheral stalk. During catalysis, ATP synthesis in the catalytic domain of F(1) is coupled via a rotary mechanism of the central stalk subunits to proton translocation. Key component of the proton channel; it may play a direct role in the translocation of protons across the membrane. This is ATP synthase subunit a (ATP6) from Brassica napus (Rape).